A 122-amino-acid chain; its full sequence is Acidic phospholipase A2 4 (122 aa).

7 disulfide bridges follow: cysteine 26–cysteine 115, cysteine 28–cysteine 44, cysteine 43–cysteine 95, cysteine 49–cysteine 122, cysteine 50–cysteine 88, cysteine 57–cysteine 81, and cysteine 75–cysteine 86. The Ca(2+) site is built by phenylalanine 27, glycine 29, and glycine 31. Residue histidine 47 is part of the active site. Aspartate 48 provides a ligand contact to Ca(2+). Aspartate 89 is a catalytic residue.

The protein belongs to the phospholipase A2 family. Group II subfamily. D49 sub-subfamily. The cofactor is Ca(2+). As to expression, expressed by the venom gland.

Its subcellular location is the secreted. The enzyme catalyses a 1,2-diacyl-sn-glycero-3-phosphocholine + H2O = a 1-acyl-sn-glycero-3-phosphocholine + a fatty acid + H(+). Its function is as follows. Snake venom phospholipase A2 (PLA2) that has high lipolytic activity. PLA2 catalyzes the calcium-dependent hydrolysis of the 2-acyl groups in 3-sn-phosphoglycerides. This chain is Acidic phospholipase A2 4, found in Craspedocephalus gramineus (Bamboo pit viper).